Here is a 256-residue protein sequence, read N- to C-terminus: Gramicidin S biosynthesis protein GrsT (256 aa).

Serine 95 is an active-site residue.

Belongs to the thioesterase family.

It functions in the pathway antibiotic biosynthesis; gramicidin S biosynthesis. Its function is as follows. Probable thioesterase involved in the biosynthesis of gramicidin S. The chain is Gramicidin S biosynthesis protein GrsT (grsT) from Aneurinibacillus migulanus (Bacillus migulanus).